Reading from the N-terminus, the 239-residue chain is uncharacterized protein (239 aa).

An N-terminal signal peptide occupies residues 1–19 (MPLLHRTIIFLQLLGTISS). N44, N58, N72, N92, N109, N136, N172, N192, and N213 each carry an N-linked (GlcNAc...) asparagine glycan.

The protein localises to the secreted. This is an uncharacterized protein from Caenorhabditis elegans.